We begin with the raw amino-acid sequence, 240 residues long: Proteasome subunit beta 1 (240 aa).

Residues 1 to 46 constitute a propeptide, removed in mature form; by autocatalysis; that stretch reads MRDMTPGPDLSGPQAADEFQSDPYAPEVGELPEQSAQDSEKVNKTG. Positions 1 to 48 are disordered; it reads MRDMTPGPDLSGPQAADEFQSDPYAPEVGELPEQSAQDSEKVNKTGTT. Threonine 47 acts as the Nucleophile in catalysis.

It belongs to the peptidase T1B family. In terms of assembly, the 20S proteasome core is composed of 14 alpha and 14 beta subunits that assemble into four stacked heptameric rings, resulting in a barrel-shaped structure. The two inner rings, each composed of seven catalytic beta subunits, are sandwiched by two outer rings, each composed of seven alpha subunits. The catalytic chamber with the active sites is on the inside of the barrel. Has a gated structure, the ends of the cylinder being occluded by the N-termini of the alpha-subunits. Is capped at one or both ends by the proteasome regulatory ATPase, PAN.

Its subcellular location is the cytoplasm. It carries out the reaction Cleavage of peptide bonds with very broad specificity.. With respect to regulation, the formation of the proteasomal ATPase PAN-20S proteasome complex, via the docking of the C-termini of PAN into the intersubunit pockets in the alpha-rings, triggers opening of the gate for substrate entry. Interconversion between the open-gate and close-gate conformations leads to a dynamic regulation of the 20S proteasome proteolysis activity. Functionally, component of the proteasome core, a large protease complex with broad specificity involved in protein degradation. This chain is Proteasome subunit beta 1, found in Haloarcula marismortui (strain ATCC 43049 / DSM 3752 / JCM 8966 / VKM B-1809) (Halobacterium marismortui).